The sequence spans 737 residues: Phosphoribosylformylglycinamidine synthase subunit PurL (737 aa).

His48 is an active-site residue. Residues Tyr51 and Lys90 each coordinate ATP. Glu92 serves as a coordination point for Mg(2+). Residues 93–96 (SHNH) and Arg115 contribute to the substrate site. The Proton acceptor role is filled by His94. Asp116 provides a ligand contact to Mg(2+). Gln244 contacts substrate. Residue Asp272 participates in Mg(2+) binding. 316-318 (ESQ) serves as a coordination point for substrate. The ATP site is built by Asp500 and Gly537. Asn538 contributes to the Mg(2+) binding site. Ser540 lines the substrate pocket.

This sequence belongs to the FGAMS family. In terms of assembly, monomer. Part of the FGAM synthase complex composed of 1 PurL, 1 PurQ and 2 PurS subunits.

The protein resides in the cytoplasm. The enzyme catalyses N(2)-formyl-N(1)-(5-phospho-beta-D-ribosyl)glycinamide + L-glutamine + ATP + H2O = 2-formamido-N(1)-(5-O-phospho-beta-D-ribosyl)acetamidine + L-glutamate + ADP + phosphate + H(+). The protein operates within purine metabolism; IMP biosynthesis via de novo pathway; 5-amino-1-(5-phospho-D-ribosyl)imidazole from N(2)-formyl-N(1)-(5-phospho-D-ribosyl)glycinamide: step 1/2. Its function is as follows. Part of the phosphoribosylformylglycinamidine synthase complex involved in the purines biosynthetic pathway. Catalyzes the ATP-dependent conversion of formylglycinamide ribonucleotide (FGAR) and glutamine to yield formylglycinamidine ribonucleotide (FGAM) and glutamate. The FGAM synthase complex is composed of three subunits. PurQ produces an ammonia molecule by converting glutamine to glutamate. PurL transfers the ammonia molecule to FGAR to form FGAM in an ATP-dependent manner. PurS interacts with PurQ and PurL and is thought to assist in the transfer of the ammonia molecule from PurQ to PurL. This chain is Phosphoribosylformylglycinamidine synthase subunit PurL, found in Sulfurimonas denitrificans (strain ATCC 33889 / DSM 1251) (Thiomicrospira denitrificans (strain ATCC 33889 / DSM 1251)).